The chain runs to 372 residues: Homoserine dehydrogenase (372 aa).

Residues V13, G15, V16, and T99 each coordinate NAD(+). Positions 16 and 99 each coordinate NADP(+). Residues V16, T99, S100, and K123 each coordinate NADPH. K123 provides a ligand contact to NADP(+). Na(+) is bound by residues E150, V153, A155, and L157. NADP(+)-binding residues include G216 and E219. The L-homoserine site is built by E219 and D230. K234 serves as the catalytic Proton donor. G352 is an NAD(+) binding site. Position 352 (G352) interacts with NADP(+). G352 contributes to the NADPH binding site.

Belongs to the homoserine dehydrogenase family. As to quaternary structure, homodimer. The cofactor is a metal cation.

It catalyses the reaction L-homoserine + NADP(+) = L-aspartate 4-semialdehyde + NADPH + H(+). It carries out the reaction L-homoserine + NAD(+) = L-aspartate 4-semialdehyde + NADH + H(+). It functions in the pathway amino-acid biosynthesis; L-methionine biosynthesis via de novo pathway; L-homoserine from L-aspartate: step 3/3. It participates in amino-acid biosynthesis; L-threonine biosynthesis; L-threonine from L-aspartate: step 3/5. In terms of biological role, catalyzes the conversion of L-aspartate-beta-semialdehyde (L-Asa) to L-homoserine (L-Hse), the third step in the biosynthesis of amino acids that derive from aspartate (the aspartate family of amino acids), including methioinine and threonine, the latter of which is a precursor to isoleucine; production of homoserine leads to a branch-point in the pathway as it can either be O-phosphorylated for processing to threonine, or O-acylated for processing to methionine. This chain is Homoserine dehydrogenase, found in Paracoccidioides brasiliensis (strain Pb18).